Here is a 153-residue protein sequence, read N- to C-terminus: MADFHLIAPKGANRARRIVGRGSSSGRGTTSGRGTKGQQARAGHKAYVGFEGGQMPLYRRVPRRGFSNCAFKKEYAVVNVGALEFVYAPGETVNRQTLIEKGLVKGRVPFIKILADGELTKSIVVRVDRVSARAQEKIQQAGGSVECIEAQER.

Residues 15-42 (ARRIVGRGSSSGRGTTSGRGTKGQQARA) are disordered. Residues 23 to 35 (SSSGRGTTSGRGT) are compositionally biased toward gly residues.

It belongs to the universal ribosomal protein uL15 family. In terms of assembly, part of the 50S ribosomal subunit.

Functionally, binds to the 23S rRNA. In Treponema pallidum (strain Nichols), this protein is Large ribosomal subunit protein uL15.